The chain runs to 82 residues: Cytochrome b559 subunit alpha (82 aa).

The chain crosses the membrane as a helical span at residues 21-35 (VIHSITIPALFIAGW). His-23 lines the heme pocket.

Belongs to the PsbE/PsbF family. Heterodimer of an alpha subunit and a beta subunit. PSII is composed of 1 copy each of membrane proteins PsbA, PsbB, PsbC, PsbD, PsbE, PsbF, PsbH, PsbI, PsbJ, PsbK, PsbL, PsbM, PsbT, PsbX, PsbY, PsbZ, Psb30/Ycf12, peripheral proteins PsbO, CyanoQ (PsbQ), PsbU, PsbV and a large number of cofactors. It forms dimeric complexes. Heme b is required as a cofactor.

Its subcellular location is the cellular thylakoid membrane. Functionally, this b-type cytochrome is tightly associated with the reaction center of photosystem II (PSII). PSII is a light-driven water:plastoquinone oxidoreductase that uses light energy to abstract electrons from H(2)O, generating O(2) and a proton gradient subsequently used for ATP formation. It consists of a core antenna complex that captures photons, and an electron transfer chain that converts photonic excitation into a charge separation. This chain is Cytochrome b559 subunit alpha, found in Nostoc punctiforme (strain ATCC 29133 / PCC 73102).